A 772-amino-acid polypeptide reads, in one-letter code: Carnitine O-palmitoyltransferase 1, muscle isoform (772 aa).

The Cytoplasmic portion of the chain corresponds to 1-47 (MAEAHQAVAFQFTVTPDGVDFRLSREALKHVYLSGINSWKKRLIRIK). The helical transmembrane segment at 48 to 73 (NGILRGVYPGSPTSWLVVIMATVGSS) threads the bilayer. Residues 74 to 102 (FCNVDISLGLVSCIQRCLPQGCGPYQTPQ) are Mitochondrial intermembrane-facing. A helical membrane pass occupies residues 103–122 (TRALLSMAIFSTGVWVTGIF). At 123 to 772 (FFRQTLKLLL…DLFQVPKAYS (650 aa)) the chain is on the cytoplasmic side. H473 (proton acceptor) is an active-site residue. Residue 555–567 (GKGLIKKCRTSPD) coordinates CoA. 2 residues coordinate (R)-carnitine: Y589 and T602.

The protein belongs to the carnitine/choline acetyltransferase family. Strong expression in heart and skeletal muscle. No expression in liver and kidney.

The protein resides in the mitochondrion outer membrane. The catalysed reaction is (R)-carnitine + hexadecanoyl-CoA = O-hexadecanoyl-(R)-carnitine + CoA. The protein operates within lipid metabolism; fatty acid beta-oxidation. Its function is as follows. Catalyzes the transfer of the acyl group of long-chain fatty acid-CoA conjugates onto carnitine, an essential step for the mitochondrial uptake of long-chain fatty acids and their subsequent beta-oxidation in the mitochondrion. This is Carnitine O-palmitoyltransferase 1, muscle isoform (CPT1B) from Homo sapiens (Human).